The chain runs to 256 residues: MIGKSLLTFSTLNEGILLKRYKRFLADVELDTGHIVTAHCANTGPMTGVLKPGGRVRVRYAPSPSRKLSWSWEQAQVVNQAGNRIWVGVNTALPNKIVRLAIEAGCFREALGEIARIRNEVKYGRTGNSRIDLLLTPGENNCDQRQIFLEIKNTTWTDGSLALFPDTVTERGQKHLQEMIDVLPNARALLVPCISRNDVDLFAPGDAADPIYGNLFRQALSEGVEVMPCCFGFFSDHITWEGMRPFRETQTIFPLP.

Belongs to the SfsA family.

This is Sugar fermentation stimulation protein homolog from Prochlorococcus marinus (strain MIT 9211).